Reading from the N-terminus, the 141-residue chain is Cystatin (141 aa).

A signal peptide spans 1-26 (MVHSQLPVAGPLRLLCALLLLPSATM). In terms of domain architecture, Cystatin spans 29–129 (GGLSPRSVTD…CHFQVWSRPW (101 aa)). Residues 73–77 (QVVSG) carry the Secondary area of contact motif. Intrachain disulfides connect cysteine 91/cysteine 107 and cysteine 120/cysteine 140.

This sequence belongs to the cystatin family. As to expression, expressed at a low level by the venom gland (at protein level).

Its subcellular location is the secreted. Its function is as follows. Inhibits various C1 cysteine proteases including cathepsin L, papain and cathepsin B. This protein has no toxic activity and its function in the venom is unknown. It may play a role as a housekeeping or regulatory protein. This chain is Cystatin, found in Pseudechis australis (Mulga snake).